A 196-amino-acid chain; its full sequence is Probable calcium-binding protein CML32 (196 aa).

EF-hand domains are found at residues 30–65 (LNAV…LGLV), 121–156 (DEEE…LGLP), and 159–194 (GSLA…ITVW). Residues D43, N45, D47, E49, E54, D134, D136, D138, E145, D172, N174, D176, R178, and E183 each contribute to the Ca(2+) site.

Its function is as follows. Potential calcium sensor. The chain is Probable calcium-binding protein CML32 (CML32) from Oryza sativa subsp. japonica (Rice).